A 1603-amino-acid chain; its full sequence is Vitellogenin-5 (1603 aa).

Positions methionine 1–alanine 15 are cleaved as a signal peptide. The 662-residue stretch at phenylalanine 24–valine 685 folds into the Vitellogenin domain. The VWFD domain occupies alanine 1306–glutamate 1475. Disulfide bonds link cysteine 1308–cysteine 1438 and cysteine 1330–cysteine 1474. The interval asparagine 1492–lysine 1513 is disordered.

Vitellogenin 5 undergoes little if any processing before being packaged into yolk platelets. As to expression, expressed in the intestine of adult hermaphrodites.

It localises to the secreted. In terms of biological role, precursor of the egg-yolk proteins that are sources of nutrients during embryonic development. Together with other vitellogenins, may play a role in modulating life-span, acting via induction of autophagy and lysosomal lipolysis. The polypeptide is Vitellogenin-5 (vit-5) (Caenorhabditis elegans).